The chain runs to 345 residues: Heat-inducible transcription repressor HrcA (345 aa).

It belongs to the HrcA family.

Its function is as follows. Negative regulator of class I heat shock genes (grpE-dnaK-dnaJ and groELS operons). Prevents heat-shock induction of these operons. This chain is Heat-inducible transcription repressor HrcA, found in Dehalococcoides mccartyi (strain ATCC BAA-2266 / KCTC 15142 / 195) (Dehalococcoides ethenogenes (strain 195)).